A 149-amino-acid chain; its full sequence is Protein SprT-like (149 aa).

In terms of domain architecture, SprT-like spans 4 to 143 (TDYVKQVSLE…CGLCRGKLLL (140 aa)). A Zn(2+)-binding site is contributed by H64. E65 is an active-site residue. H68 is a binding site for Zn(2+).

Belongs to the SprT family. Zn(2+) is required as a cofactor.

The protein resides in the cytoplasm. In Streptococcus pneumoniae (strain Taiwan19F-14), this protein is Protein SprT-like.